Consider the following 872-residue polypeptide: Metabotropic glutamate receptor 2 (872 aa).

An N-terminal signal peptide occupies residues 1–18; it reads MGSLLALLALLLLWGAVA. Residues 19–567 are Extracellular-facing; it reads EGPAKKVLTL…QEYIRWGDAW (549 aa). The cysteines at positions 50 and 92 are disulfide-linked. Residues Arg-57, Arg-61, Ser-145, Ala-166, and Thr-168 each coordinate L-glutamate. Asn-203 and Asn-286 each carry an N-linked (GlcNAc...) asparagine glycan. Intrachain disulfides connect Cys-234-Cys-518, Cys-355-Cys-362, Cys-400-Cys-407, Cys-500-Cys-519, Cys-504-Cys-522, Cys-525-Cys-537, and Cys-540-Cys-553. Asp-295 is a binding site for L-glutamate. N-linked (GlcNAc...) asparagine glycosylation occurs at Asn-338. Lys-377 provides a ligand contact to L-glutamate. Residue Asn-402 is glycosylated (N-linked (GlcNAc...) asparagine). Residue Asn-547 is glycosylated (N-linked (GlcNAc...) asparagine). The chain crosses the membrane as a helical span at residues 568–590; that stretch reads AVGPVTIACLGALATLFVLGVFV. The Cytoplasmic segment spans residues 591 to 604; sequence RHNATPVVKASGRE. Residues 605–625 traverse the membrane as a helical segment; that stretch reads LCYILLGGVFLCYCMTFIFIA. Over 626 to 636 the chain is Extracellular; the sequence is KPSTAVCTLRR. Cysteines 632 and 721 form a disulfide. The chain crosses the membrane as a helical span at residues 637-655; the sequence is LGLGTAFSVCYSALLTKTN. Topologically, residues 656-679 are cytoplasmic; that stretch reads RIARIFGGAREGAQRPRFISPASQ. The segment at 677–685 is important for interaction with HTR2A; that stretch reads ASQVAICLA. A helical transmembrane segment spans residues 680 to 700; the sequence is VAICLALISGQLLIVVAWLVV. Residues 701–725 lie on the Extracellular side of the membrane; that stretch reads EAPGTGKETAPERREVVTLRCNHRD. Residues 726-747 traverse the membrane as a helical segment; sequence ASMLGSLAYNVLLIALCTLYAF. Topologically, residues 748 to 760 are cytoplasmic; it reads KTRKCPENFNEAK. A helical membrane pass occupies residues 761–783; that stretch reads FIGFTMYTTCIIWLAFLPIFYVT. Topologically, residues 784–793 are extracellular; the sequence is SSDYRVQTTT. Residues 794–819 traverse the membrane as a helical segment; the sequence is MCVSVSLSGSVVLGCLFAPKLHIILF. Residues 820–872 are Cytoplasmic-facing; the sequence is QPQKNVVSHRAPTSRFGSAAARASSSLGQGSGSQFVPTVCNGREVVDSTTSSL.

This sequence belongs to the G-protein coupled receptor 3 family. In terms of assembly, forms heterodimers with GRM3 or GRM4. Interacts with TAMALIN. Interacts with HTR2A. As to quaternary structure, (Microbial infection) Interacts with H5N6 virus protein HA. (Microbial infection) Interacts with rabies virus protein G. In terms of assembly, (Microbial infection) Interacts with SARS-CoV-2 virus spike protein S. In terms of tissue distribution, detected in brain cortex (at protein level). Widely expressed in different regions of the adult brain as well as in fetal brain.

The protein resides in the cell membrane. It localises to the synapse. The protein localises to the cell projection. Its subcellular location is the dendrite. Its function is as follows. Dimeric G protein-coupled receptor which is activated by the excitatory neurotransmitter L-glutamate. Plays critical roles in modulating synaptic transmission and neuronal excitability. Upon activation by glutamate, inhibits presynaptic calcium channels, reducing further glutamate release and dampening excitatory signaling. Mechanistically, ligand binding causes a conformation change that triggers signaling via guanine nucleotide-binding proteins (G proteins) and modulates the activity of down-stream effectors, such as adenylate cyclase. May mediate suppression of neurotransmission or may be involved in synaptogenesis or synaptic stabilization. (Microbial infection) Plays an important role in influenza virus internalization. In terms of biological role, (Microbial infection) Acts as a host entry factor for rabies virus that hijacks the endocytosis of GRM2 to enter cells. Functionally, (Microbial infection) Acts as a host entry factor for SARS-CoV-2 that hijacks the endocytosis of GRM2 to enter cells. The polypeptide is Metabotropic glutamate receptor 2 (Homo sapiens (Human)).